Reading from the N-terminus, the 659-residue chain is Endoglucanase A (659 aa).

The segment at 1-500 is catalytic; sequence MLIFETYLIL…SKLPNFPPKE (500 aa). The active-site Nucleophile is the Asp101. Positions 413–433 are disordered; sequence NSPKHPHHRTAHGSWSNQLTN. Active-site residues include His419, Asp457, and Glu466. Positions 501-658 constitute a CBM3 domain; it reads QVEDEFFVEA…GVLVFGTLPD (158 aa).

It belongs to the glycosyl hydrolase 9 (cellulase E) family.

It localises to the secreted. It catalyses the reaction Endohydrolysis of (1-&gt;4)-beta-D-glucosidic linkages in cellulose, lichenin and cereal beta-D-glucans.. Strongly inhibited by ZnCl(2) and by EDTA. Its function is as follows. Active on carboxymethyl cellulose and carboxymethyl cellulose-RBB but not avicel, xanthan gum, carboxymethyl-curdulan-RBB or carboxymethyl-xylan-RBB. The polypeptide is Endoglucanase A (eglA) (Bacillus pumilus (Bacillus mesentericus)).